A 153-amino-acid chain; its full sequence is Fucose mutarotase (153 aa).

H24 acts as the Proton donor in catalysis. D32 lines the substrate pocket. D69 is an active-site residue. Residues M79, Y120, Y138, and N140 each coordinate substrate. The active site involves Y120.

Belongs to the RbsD / FucU family. Mainly homodimer, but also exists as homotetramer, homooctamer, and homodecamer. The homodimeric form seems catalytically inactive. In terms of tissue distribution, widely expressed in various tissues and cell lines, including kidney, liver, and pancreas, marginally in muscle and testis.

The enzyme catalyses alpha-L-fucose = beta-L-fucose. Its pathway is carbohydrate metabolism; L-fucose metabolism. Its function is as follows. Involved in the interconversion between alpha- and beta-L-fucoses. L-Fucose (6-deoxy-L-galactose) exists as alpha-L-fucose (29.5%) and beta-L-fucose (70.5%), the beta-form is metabolized through the salvage pathway. GDP-L-fucose formed either by the de novo or salvage pathways is transported into the endoplasmic reticulum, where it serves as a substrate for N- and O-glycosylations by fucosyltransferases. Fucosylated structures expressed on cell surfaces or secreted in biological fluids are believed to play a critical role in cell-cell adhesion and recognition processes. In Mus musculus (Mouse), this protein is Fucose mutarotase (Fuom).